A 270-amino-acid polypeptide reads, in one-letter code: uncharacterized protein (270 aa).

Its function is as follows. Possibly involved in pGI2 replication mechanism. This is an uncharacterized protein from Bacillus thuringiensis.